The chain runs to 223 residues: Zinc-finger homeodomain protein 12 (223 aa).

Positions Met1 to Asp20 are enriched in polar residues. The disordered stretch occupies residues Met1–Glu24. The ZF-HD dimerization-type; degenerate zinc finger occupies Tyr37–Ser88. Residues Lys147–Tyr204 constitute a DNA-binding region (homeobox; atypical).

In terms of assembly, homo- and heterodimer with other ZFHD proteins. Interacts with ZHD11.

Its subcellular location is the nucleus. In terms of biological role, putative transcription factor. This is Zinc-finger homeodomain protein 12 (ZHD12) from Arabidopsis thaliana (Mouse-ear cress).